Here is a 77-residue protein sequence, read N- to C-terminus: uncharacterized protein (77 aa).

Residues 56 to 77 (SVIPKQQPPSSAAAISESEFED) are disordered. Over residues 65-77 (SSAAAISESEFED) the composition is skewed to low complexity.

This is an uncharacterized protein from Frog virus 3 (isolate Goorha) (FV-3).